Here is a 38-residue protein sequence, read N- to C-terminus: Large ribosomal subunit protein bL36 (38 aa).

Belongs to the bacterial ribosomal protein bL36 family.

The polypeptide is Large ribosomal subunit protein bL36 (Amoebophilus asiaticus (strain 5a2)).